We begin with the raw amino-acid sequence, 106 residues long: Met repressor (106 aa).

The protein belongs to the MetJ family. As to quaternary structure, homodimer.

It localises to the cytoplasm. Its function is as follows. This regulatory protein, when combined with SAM (S-adenosylmethionine) represses the expression of the methionine regulon and of enzymes involved in SAM synthesis. This Vibrio atlanticus (strain LGP32) (Vibrio splendidus (strain Mel32)) protein is Met repressor.